The following is a 571-amino-acid chain: Translation initiation factor IF-2 (571 aa).

In terms of domain architecture, tr-type G spans 71-239 (RRPPVVVIMG…ILLLAELEDY (169 aa)). The tract at residues 80-87 (GHVDHGKT) is G1. A GTP-binding site is contributed by 80-87 (GHVDHGKT). The segment at 105–109 (GITQH) is G2. The interval 126-129 (DTPG) is G3. Residues 126 to 130 (DTPGH) and 180 to 183 (NKID) contribute to the GTP site. Residues 180–183 (NKID) are G4. Positions 216-218 (SAK) are G5.

The protein belongs to the TRAFAC class translation factor GTPase superfamily. Classic translation factor GTPase family. IF-2 subfamily.

It is found in the cytoplasm. Functionally, one of the essential components for the initiation of protein synthesis. Protects formylmethionyl-tRNA from spontaneous hydrolysis and promotes its binding to the 30S ribosomal subunits. Also involved in the hydrolysis of GTP during the formation of the 70S ribosomal complex. The protein is Translation initiation factor IF-2 of Thermus thermophilus (strain ATCC BAA-163 / DSM 7039 / HB27).